Reading from the N-terminus, the 231-residue chain is Urease subunit gamma/beta (231 aa).

Residues 1–101 (MLLTPTELER…LVTVHQPIRP (101 aa)) are urease gamma. The interval 102–231 (GKLPLAVMPT…RARAQHFKGA (130 aa)) is urease beta.

In the N-terminal section; belongs to the urease gamma subunit family. It in the C-terminal section; belongs to the urease beta subunit family. In terms of assembly, heterohexamer of 3 UreC (alpha) and 3 UreAB (gamma/beta) subunits.

The protein localises to the cytoplasm. The catalysed reaction is urea + 2 H2O + H(+) = hydrogencarbonate + 2 NH4(+). It participates in nitrogen metabolism; urea degradation; CO(2) and NH(3) from urea (urease route): step 1/1. This chain is Urease subunit gamma/beta, found in Pseudomonas syringae pv. tomato (strain ATCC BAA-871 / DC3000).